The sequence spans 1545 residues: Immunoglobulin A1 protease autotransporter (1545 aa).

The signal sequence occupies residues 1–25; the sequence is MLNKKFKLNFIALTVAYALTPYTEA. The Peptidase S6 domain occupies 26–336; the sequence is ALVRDDVDYQ…NIYKPEFAEK (311 aa). Serine 292 is a catalytic residue. The span at 995–1019 shows a compositional bias: polar residues; that stretch reads TVDTTNITTPNNIQADVPSVPSNNE. The segment at 995 to 1246 is disordered; the sequence is TVDTTNITTP…NVEPATTSSN (252 aa). Positions 1036-1046 are enriched in low complexity; the sequence is TPSETTETVAE. The segment covering 1048–1060 has biased composition (basic and acidic residues); it reads SKQESKTVEKNEQ. Positions 1080 to 1094 are enriched in polar residues; it reads VKANTQTNEVAQSGS. Basic and acidic residues predominate over residues 1095–1125; sequence ETKETQTTETKETATVEKEEKAKVETEKTQE. Composition is skewed to polar residues over residues 1129–1145 and 1161–1222; these read VTSQVSPKQEQSETVQP and EPQS…SSNK. The Autotransporter domain occupies 1293–1545; that stretch reads NNEGQYNVWV…TAELKLSFSF (253 aa).

Its subcellular location is the periplasm. It localises to the secreted. It is found in the cell surface. The protein localises to the cell outer membrane. The catalysed reaction is Cleavage of immunoglobulin A molecules at certain Pro-|-Xaa bonds in the hinge region. No small molecule substrates are known.. Functionally, virulence factor; cleaves host immunoglobulin A producing intact Fc and Fab fragments. The sequence is that of Immunoglobulin A1 protease autotransporter (iga) from Haemophilus influenzae.